A 189-amino-acid polypeptide reads, in one-letter code: Threonylcarbamoyl-AMP synthase (189 aa).

One can recognise a YrdC-like domain in the interval 7–189; sequence NFTVKGLTEQ…DAITGKIIRK (183 aa).

It belongs to the SUA5 family. TsaC subfamily.

It is found in the cytoplasm. The catalysed reaction is L-threonine + hydrogencarbonate + ATP = L-threonylcarbamoyladenylate + diphosphate + H2O. In terms of biological role, required for the formation of a threonylcarbamoyl group on adenosine at position 37 (t(6)A37) in tRNAs that read codons beginning with adenine. Catalyzes the conversion of L-threonine, HCO(3)(-)/CO(2) and ATP to give threonylcarbamoyl-AMP (TC-AMP) as the acyladenylate intermediate, with the release of diphosphate. This is Threonylcarbamoyl-AMP synthase from Blochmanniella floridana.